Here is a 222-residue protein sequence, read N- to C-terminus: 2-hydroxypent-2,4-dienoate hydratase (222 aa).

This sequence belongs to the hydratase/decarboxylase family.

It functions in the pathway aromatic compound metabolism; benzoate degradation via hydroxylation. Functionally, conversion of 2-hydroxypent-2,4-dienoate into 4-hydroxy-2-oxopentanoate. The sequence is that of 2-hydroxypent-2,4-dienoate hydratase (xylJ) from Pseudomonas putida (Arthrobacter siderocapsulatus).